A 158-amino-acid polypeptide reads, in one-letter code: Transcription elongation factor GreA (158 aa).

Residues 47–73 (AEYHAAREKQSFIEGRIQELQAKLARA) adopt a coiled-coil conformation.

This sequence belongs to the GreA/GreB family.

In terms of biological role, necessary for efficient RNA polymerase transcription elongation past template-encoded arresting sites. The arresting sites in DNA have the property of trapping a certain fraction of elongating RNA polymerases that pass through, resulting in locked ternary complexes. Cleavage of the nascent transcript by cleavage factors such as GreA or GreB allows the resumption of elongation from the new 3'terminus. GreA releases sequences of 2 to 3 nucleotides. In Thermodesulfovibrio yellowstonii (strain ATCC 51303 / DSM 11347 / YP87), this protein is Transcription elongation factor GreA.